A 252-amino-acid polypeptide reads, in one-letter code: MMLHAQHMPGQPGTPSLVFLHGFSGDCREWQPVGEQFHGCSRLNIDLPGHGGSAAIPVGGFADVIRLLRATLISYNILKFWLVGYSLGDRVQMIASCQGIPGLCGLVVEGGHPGLQNEQARAERRLSDGRWAERFRHEPLTEVFHDWYQQPVFASLTAQQRQALTALRSQNNGETLAAMLEATSLAVQPDLREVLNALAFPFYYLCGERDSKFRALAQEVAATCHVIRNAGHNAHRENPAGVVDSLAQILRL.

This sequence belongs to the AB hydrolase superfamily. MenH family. In terms of assembly, monomer.

It carries out the reaction 5-enolpyruvoyl-6-hydroxy-2-succinyl-cyclohex-3-ene-1-carboxylate = (1R,6R)-6-hydroxy-2-succinyl-cyclohexa-2,4-diene-1-carboxylate + pyruvate. It participates in quinol/quinone metabolism; 1,4-dihydroxy-2-naphthoate biosynthesis; 1,4-dihydroxy-2-naphthoate from chorismate: step 3/7. The protein operates within quinol/quinone metabolism; menaquinone biosynthesis. In terms of biological role, catalyzes a proton abstraction reaction that results in 2,5-elimination of pyruvate from 2-succinyl-5-enolpyruvyl-6-hydroxy-3-cyclohexene-1-carboxylate (SEPHCHC) and the formation of 2-succinyl-6-hydroxy-2,4-cyclohexadiene-1-carboxylate (SHCHC). The chain is 2-succinyl-6-hydroxy-2,4-cyclohexadiene-1-carboxylate synthase from Salmonella typhi.